An 84-amino-acid polypeptide reads, in one-letter code: Delta-conotoxin-like Bt6.4 (84 aa).

The first 22 residues, 1–22 (MKLTCMVIVAVLFLTAWTSVMA), serve as a signal peptide directing secretion. Residues 23-57 (DGSINRPDIAEGWQKFFSKARDEMKNRAASELNKR) constitute a propeptide that is removed on maturation. Cystine bridges form between Cys-58/Cys-74, Cys-65/Cys-78, and Cys-73/Cys-82.

It belongs to the conotoxin O1 superfamily. As to expression, expressed by the venom duct.

The protein localises to the secreted. This toxin activates voltage-gated sodium channels. It shifts the voltage-dependence of activation to more hyperpolarized potentials but has only little effect on channel inactivation. It is active on Nav1.3/SCN3A (EC(50)=3.98 nM), Nav1.4/SCN4A (EC(50)=4.99 nM), Nav1.6/SCN8A (EC(50)=1.27 nM) and Nav1.7/SCN9A (EC(50)=2.42 nM) voltage-gated sodium channels. In vivo, it induces nocifensive or pain-like behaviors in mice when injected intraplantarly. The sequence is that of Delta-conotoxin-like Bt6.4 from Conus betulinus (Beech cone).